A 248-amino-acid chain; its full sequence is Mannosylfructose-phosphate phosphatase (248 aa).

This sequence belongs to the sucrose phosphatase family.

The catalysed reaction is beta-D-fructofuranosyl alpha-D-mannopyranoside 6(F)-phosphate + H2O = beta-D-fructofuranosyl alpha-D-mannopyranoside + phosphate. It participates in carbohydrate metabolism; mannosylfructose biosynthesis; beta-D-fructofuranosyl alpha-D-mannopyranoside from D-fructose 6-phosphate and GDP-alpha-D-mannose: step 2/2. With respect to regulation, inhibited by the phosphatase inhibitors fluoride, molybdate and orthovanadate. This is Mannosylfructose-phosphate phosphatase from Agrobacterium fabrum (strain C58 / ATCC 33970) (Agrobacterium tumefaciens (strain C58)).